Here is a 172-residue protein sequence, read N- to C-terminus: Shikimate kinase (172 aa).

14 to 19 serves as a coordination point for ATP; it reads GAGKTT. Thr18 provides a ligand contact to Mg(2+). 3 residues coordinate substrate: Asp36, Arg60, and Gly82. Arg119 is an ATP binding site. Residue Arg137 coordinates substrate.

It belongs to the shikimate kinase family. As to quaternary structure, monomer. It depends on Mg(2+) as a cofactor.

Its subcellular location is the cytoplasm. The enzyme catalyses shikimate + ATP = 3-phosphoshikimate + ADP + H(+). The protein operates within metabolic intermediate biosynthesis; chorismate biosynthesis; chorismate from D-erythrose 4-phosphate and phosphoenolpyruvate: step 5/7. Catalyzes the specific phosphorylation of the 3-hydroxyl group of shikimic acid using ATP as a cosubstrate. The polypeptide is Shikimate kinase (Thermobifida fusca (strain YX)).